Consider the following 105-residue polypeptide: DNA-directed RNA polymerase subunit Rpo13 (105 aa).

2 stretches are compositionally biased toward basic and acidic residues: residues 1 to 10 and 70 to 80; these read MSEDDSKKEP and FDDVARSYSKA. Disordered stretches follow at residues 1-35 and 70-105; these read MSEDDSKKEPEPEETEAEIKHEEISREEDDEGGEF and FDDVARSYSKADKKKRRVEKKPKKGKVTKKSDEEEE. A compositionally biased stretch (basic residues) spans 81–97; the sequence is DKKKRRVEKKPKKGKVT.

This sequence belongs to the archaeal Rpo13 RNA polymerase subunit family. Part of the 13-subunit RNA polymerase.

The protein localises to the cytoplasm. It carries out the reaction RNA(n) + a ribonucleoside 5'-triphosphate = RNA(n+1) + diphosphate. In terms of biological role, DNA-dependent RNA polymerase catalyzes the transcription of DNA into RNA using the four ribonucleoside triphosphates as substrates. In vitro binds dsDNA but not ssDNA. This chain is DNA-directed RNA polymerase subunit Rpo13, found in Sulfolobus acidocaldarius (strain ATCC 33909 / DSM 639 / JCM 8929 / NBRC 15157 / NCIMB 11770).